The following is a 193-amino-acid chain: dCTP deaminase, dUMP-forming (193 aa).

DCTP is bound by residues 101-106 (KSSLGR), aspartate 119, 127-129 (TLE), glutamine 148, tyrosine 162, and glutamine 174. The active-site Proton donor/acceptor is glutamate 129.

Belongs to the dCTP deaminase family. In terms of assembly, homotrimer.

It catalyses the reaction dCTP + 2 H2O = dUMP + NH4(+) + diphosphate. Its pathway is pyrimidine metabolism; dUMP biosynthesis; dUMP from dCTP: step 1/1. Bifunctional enzyme that catalyzes both the deamination of dCTP to dUTP and the hydrolysis of dUTP to dUMP without releasing the toxic dUTP intermediate. The protein is dCTP deaminase, dUMP-forming of Bifidobacterium adolescentis (strain ATCC 15703 / DSM 20083 / NCTC 11814 / E194a).